The chain runs to 116 residues: Putative pterin-4-alpha-carbinolamine dehydratase (116 aa).

This sequence belongs to the pterin-4-alpha-carbinolamine dehydratase family.

The catalysed reaction is (4aS,6R)-4a-hydroxy-L-erythro-5,6,7,8-tetrahydrobiopterin = (6R)-L-erythro-6,7-dihydrobiopterin + H2O. The protein is Putative pterin-4-alpha-carbinolamine dehydratase of Paracidovorax citrulli (strain AAC00-1) (Acidovorax citrulli).